Here is a 635-residue protein sequence, read N- to C-terminus: Threonine--tRNA ligase (635 aa).

Positions 1–61 constitute a TGS domain; sequence MINISFPDGS…DNDCKLRILT (61 aa). The segment at 242-533 is catalytic; the sequence is DHRKLGRELD…LIEEYAGRFP (292 aa). Zn(2+) contacts are provided by cysteine 333, histidine 384, and histidine 510.

This sequence belongs to the class-II aminoacyl-tRNA synthetase family. As to quaternary structure, homodimer. The cofactor is Zn(2+).

The protein resides in the cytoplasm. The enzyme catalyses tRNA(Thr) + L-threonine + ATP = L-threonyl-tRNA(Thr) + AMP + diphosphate + H(+). Its function is as follows. Catalyzes the attachment of threonine to tRNA(Thr) in a two-step reaction: L-threonine is first activated by ATP to form Thr-AMP and then transferred to the acceptor end of tRNA(Thr). Also edits incorrectly charged L-seryl-tRNA(Thr). This Rickettsia conorii (strain ATCC VR-613 / Malish 7) protein is Threonine--tRNA ligase.